Reading from the N-terminus, the 437-residue chain is Branched-chain amino acid transport system 3 carrier protein (437 aa).

12 helical membrane-spanning segments follow: residues 9–29 (ILAL…IIFP), 40–60 (VWLA…ITVI), 79–99 (YAGG…FAIP), 120–140 (ALFV…LYPG), 155–175 (ILAL…PIGT), 189–209 (FVNG…IVIV), 226–246 (YAIV…VSLF), 277–297 (LGSS…AVGL), 316–336 (LVII…TKLI), 342–362 (VLTA…CIGL), 369–389 (ILAP…LKAA), and 399–419 (LLHL…VATL).

Belongs to the branched chain amino acid transporter family.

It localises to the cell inner membrane. Functionally, component of the LIV-III transport system for branched-chain amino acids. BraZ is specific for isoleucine and valine. The LIV-III transport system may be H(+)-coupled. In Pseudomonas aeruginosa (strain ATCC 15692 / DSM 22644 / CIP 104116 / JCM 14847 / LMG 12228 / 1C / PRS 101 / PAO1), this protein is Branched-chain amino acid transport system 3 carrier protein (braZ).